The sequence spans 548 residues: Cilia- and flagella-associated protein 97 (548 aa).

Residues Ser8 and Ser19 each carry the phosphoserine modification. Disordered stretches follow at residues 85–297, 407–431, and 497–548; these read NYLT…RQEN, LSRQ…PPKL, and YSPL…LRSH. Residues 91–107 show a composition bias toward basic and acidic residues; that stretch reads GNERKPKFPSKEQHVEN. The segment covering 112–121 has biased composition (low complexity); sequence TRSPSLLTSS. Acidic residues predominate over residues 152–161; it reads DYYTDGEESS. Thr155 is subject to Phosphothreonine. Phosphoserine is present on residues Ser160 and Ser161. Positions 191–209 are enriched in low complexity; it reads KASSSSLSSSSSRSSSDCS. Residues 214-237 are compositionally biased toward polar residues; sequence DMQNKPDSGSSGKRVSSVTPSSPK. Ser235 is modified (phosphoserine). The segment covering 238 to 248 has biased composition (basic residues); that stretch reads QKCKSGRKSSA. Ser259 carries the post-translational modification Phosphoserine. The segment covering 264–289 has biased composition (polar residues); it reads TDVTPASTPDSSPAQPFELSQSQNQK. Residues 383–460 are a coiled coil; it reads RKNYSFTREE…ALLKRLEAVK (78 aa). Polar residues-rich tracts occupy residues 504-514 and 537-548; these read SRTSSATSGLS and IQCSNSKVLRSH.

Belongs to the CFAP97 family.

The chain is Cilia- and flagella-associated protein 97 from Rattus norvegicus (Rat).